Reading from the N-terminus, the 468-residue chain is Zinc transporter SLC39A7 (468 aa).

The helical transmembrane segment at 10–30 (WVAVGLLTWAALGLLVAGHEG) threads the bilayer. Basic and acidic residues-rich tracts occupy residues 36–56 (RDVEEDFHGHSHGHSHEDFHH) and 64–100 (HTHESIWHGHAHSHDHGHSREDVHHGHSHGHSHDSLH). The segment at 36–116 (RDVEEDFHGH…SHGASREAGA (81 aa)) is disordered. Residue His-64 is modified to Pros-methylhistidine. The next 3 helical transmembrane spans lie at 132 to 152 (ALGATVLISAAPFFVLFLIPV), 163 to 183 (LQILLSFASGGLLGDAFLHLI), and 208 to 228 (GPILSVGLWVLSGIVAFLVVE). Positions 237–248 (GHGHAHAHGHGH) are enriched in basic residues. Positions 237-313 (GHGHAHAHGH…NPEEEKTGSD (77 aa)) are disordered. The span at 249 to 312 (SHGDSHAHGH…QNPEEEKTGS (64 aa)) shows a compositional bias: basic and acidic residues. 3 helical membrane passes run 385-405 (LTAIGALAGTACALLTEGGAV), 409-429 (VAGGAGPGWVLPFTAGGFIYV), and 447-467 (SLLEVLGLLGGVAMMVLIAHL).

This sequence belongs to the ZIP transporter (TC 2.A.5) family. KE4/Catsup subfamily. As to quaternary structure, homodimer. Rapidly phosphorylated by CK2 following Zn(2+) treatment. This phosphorylation is required for efficient cytosolic Zn(2+) release.

The protein resides in the endoplasmic reticulum membrane. Its subcellular location is the golgi apparatus. It localises to the cis-Golgi network membrane. The enzyme catalyses Zn(2+)(in) = Zn(2+)(out). Functionally, transports Zn(2+) from the endoplasmic reticulum (ER)/Golgi apparatus to the cytosol, playing an essential role in the regulation of cytosolic zinc levels. Acts as a gatekeeper of zinc release from intracellular stores, requiring post-translational activation by phosphorylation on residues, resulting in activation of multiple downstream pathways leading to cell growth and proliferation. Has an essential role in B cell development and is required for proper B cell receptor signaling. Plays an important role in maintaining intestinal epithelial homeostasis and skin dermis development by regulating ER function. Controls cell signaling pathways involved in glucose metabolism in skeletal muscle. Has a protective role against ER stress in different biological contexts. Mediates Zn(2+)-induced ferroptosis. This is Zinc transporter SLC39A7 from Rattus norvegicus (Rat).